The chain runs to 442 residues: Probable alpha-galactosidase B (442 aa).

Positions 1–19 (MQRYISLSVSLSLLSGANA) are cleaved as a signal peptide. Cystine bridges form between C42-C74 and C124-C154. The Nucleophile role is filled by D152. N-linked (GlcNAc...) asparagine glycosylation is found at N159, N173, N179, and N215. 224-228 (EWGQA) serves as a coordination point for substrate. N-linked (GlcNAc...) asparagine glycosylation occurs at N235. Residue D246 is the Proton donor of the active site. An N-linked (GlcNAc...) asparagine glycan is attached at N285.

It belongs to the glycosyl hydrolase 27 family.

The protein resides in the secreted. It catalyses the reaction Hydrolysis of terminal, non-reducing alpha-D-galactose residues in alpha-D-galactosides, including galactose oligosaccharides, galactomannans and galactolipids.. Functionally, hydrolyzes a variety of simple alpha-D-galactoside as well as more complex molecules such as oligosaccharides and polysaccharides. The protein is Probable alpha-galactosidase B (aglB) of Aspergillus oryzae (strain ATCC 42149 / RIB 40) (Yellow koji mold).